A 395-amino-acid chain; its full sequence is Phosphoglycerate kinase (395 aa).

Residues 20–22 (DFN), Arg-36, 59–62 (HLGR), Arg-120, and Arg-157 each bind substrate. ATP contacts are provided by residues Lys-208, Gly-296, Glu-327, and 353–356 (GGDT).

It belongs to the phosphoglycerate kinase family. In terms of assembly, monomer.

Its subcellular location is the cytoplasm. It carries out the reaction (2R)-3-phosphoglycerate + ATP = (2R)-3-phospho-glyceroyl phosphate + ADP. It participates in carbohydrate degradation; glycolysis; pyruvate from D-glyceraldehyde 3-phosphate: step 2/5. This is Phosphoglycerate kinase from Tropheryma whipplei (strain TW08/27) (Whipple's bacillus).